The sequence spans 333 residues: Flagellar P-ring protein (333 aa).

A signal peptide spans 1–22; sequence MRRNILSMFLFITLIIYSSIFA.

This sequence belongs to the FlgI family. The basal body constitutes a major portion of the flagellar organelle and consists of four rings (L,P,S, and M) mounted on a central rod.

The protein localises to the periplasm. The protein resides in the bacterial flagellum basal body. Functionally, assembles around the rod to form the L-ring and probably protects the motor/basal body from shearing forces during rotation. The sequence is that of Flagellar P-ring protein from Fervidobacterium nodosum (strain ATCC 35602 / DSM 5306 / Rt17-B1).